A 20-amino-acid polypeptide reads, in one-letter code: Venom peptide Ocy8 (20 aa).

As to expression, expressed by the venom gland.

The protein localises to the secreted. This chain is Venom peptide Ocy8, found in Opisthacanthus cayaporum (South American scorpion).